We begin with the raw amino-acid sequence, 281 residues long: Transcription factor HES-1 (281 aa).

The disordered stretch occupies residues 1 to 44 (MPADIMEKNSSSPVAATPASVNTTPDKPKTASEHRKSSKPIMEK). Residues 10 to 21 (SSSPVAATPASV) are compositionally biased toward low complexity. Positions 26–35 (DKPKTASEHR) are enriched in basic and acidic residues. In terms of domain architecture, bHLH spans 34–91 (HRKSSKPIMEKRRRARINESLSQLKTLILDALKKDSSRHSKLEKADILEMTVKHLRNL). Positions 110–143 (YRAGFSECMNEVTRFLSTCEGVNTEVRTRLLGHL) constitute an Orange domain. 2 disordered regions span residues 158-206 (QAHP…PCKL) and 255-281 (TSVGPNAVSPSSGSSLTADSMWRPWRN). 2 stretches are compositionally biased toward pro residues: residues 164–174 (QAPPPPPPSGP) and 182–201 (FAPPPPLVPIPGGAAPPPGS). The segment covering 255-272 (TSVGPNAVSPSSGSSLTA) has biased composition (polar residues). The short motif at 276–279 (WRPW) is the WRPW motif element.

In terms of assembly, interacts with SIRT1. Interacts weakly with TLE2. Interacts with HES6. Transcription repression requires formation of a complex with a corepressor protein of the Groucho/TLE family. Interacts (via WPRW motif) with TLE1. Interacts with an FA complex, composed of FANCA, FANCF, FANCG and FANCL, but not of FANCC, nor FANCE. In terms of tissue distribution, present in all tissues examined but highest in epithelial cells and in mesoderm-derived tissues such as embryonal muscle cells.

The protein localises to the nucleus. Functionally, transcriptional repressor of genes that require a bHLH protein for their transcription. May act as a negative regulator of myogenesis by inhibiting the functions of MYOD1 and ASH1. Binds DNA on N-box motifs: 5'-CACNAG-3' with high affinity and on E-box motifs: 5'-CANNTG-3' with low affinity. May play a role in a functional FA core complex response to DNA cross-link damage, being required for the stability and nuclear localization of FA core complex proteins, as well as for FANCD2 monoubiquitination in response to DNA damage. This Rattus norvegicus (Rat) protein is Transcription factor HES-1 (Hes1).